The sequence spans 504 residues: ATP synthase subunit alpha (504 aa).

An ATP-binding site is contributed by 169–176 (GDRQTGKT).

The protein belongs to the ATPase alpha/beta chains family. As to quaternary structure, F-type ATPases have 2 components, CF(1) - the catalytic core - and CF(0) - the membrane proton channel. CF(1) has five subunits: alpha(3), beta(3), gamma(1), delta(1), epsilon(1). CF(0) has three main subunits: a(1), b(2) and c(9-12). The alpha and beta chains form an alternating ring which encloses part of the gamma chain. CF(1) is attached to CF(0) by a central stalk formed by the gamma and epsilon chains, while a peripheral stalk is formed by the delta and b chains.

It is found in the cell membrane. The catalysed reaction is ATP + H2O + 4 H(+)(in) = ADP + phosphate + 5 H(+)(out). Produces ATP from ADP in the presence of a proton gradient across the membrane. The alpha chain is a regulatory subunit. The polypeptide is ATP synthase subunit alpha (Clostridium botulinum (strain Langeland / NCTC 10281 / Type F)).